Here is a 198-residue protein sequence, read N- to C-terminus: Peptidyl-tRNA hydrolase (198 aa).

Tyrosine 15 serves as a coordination point for tRNA. Histidine 20 serves as the catalytic Proton acceptor. The tRNA site is built by phenylalanine 65, asparagine 67, and asparagine 113.

Belongs to the PTH family. Monomer.

It is found in the cytoplasm. It catalyses the reaction an N-acyl-L-alpha-aminoacyl-tRNA + H2O = an N-acyl-L-amino acid + a tRNA + H(+). Its function is as follows. Hydrolyzes ribosome-free peptidyl-tRNAs (with 1 or more amino acids incorporated), which drop off the ribosome during protein synthesis, or as a result of ribosome stalling. Catalyzes the release of premature peptidyl moieties from peptidyl-tRNA molecules trapped in stalled 50S ribosomal subunits, and thus maintains levels of free tRNAs and 50S ribosomes. The chain is Peptidyl-tRNA hydrolase from Ehrlichia chaffeensis (strain ATCC CRL-10679 / Arkansas).